The primary structure comprises 398 residues: Heat-inducible transcription repressor HrcA (398 aa).

This sequence belongs to the HrcA family.

Negative regulator of class I heat shock genes (grpE-dnaK-dnaJ and groELS operons). Prevents heat-shock induction of these operons. The chain is Heat-inducible transcription repressor HrcA from Chlamydia pneumoniae (Chlamydophila pneumoniae).